The following is a 398-amino-acid chain: uncharacterized protein (398 aa).

Belongs to the class-V pyridoxal-phosphate-dependent aminotransferase family. In terms of assembly, homodimer.

In terms of biological role, is essential for optimal growth. This is an uncharacterized protein from Mycobacterium tuberculosis (strain CDC 1551 / Oshkosh).